The sequence spans 436 residues: GTPase Der (436 aa).

EngA-type G domains follow at residues 4-165 (NVIA…NFDS) and 172-347 (FKLS…ENLE). GTP-binding positions include 10–17 (GKPNVGKS), 57–61 (DTGGI), 119–122 (NKLD), 178–185 (GQPNSGKS), 225–229 (DTAGI), and 290–293 (NKWD). Positions 348–432 (REIKPSVLTN…PINIIFKNKS (85 aa)) constitute a KH-like domain.

The protein belongs to the TRAFAC class TrmE-Era-EngA-EngB-Septin-like GTPase superfamily. EngA (Der) GTPase family. Associates with the 50S ribosomal subunit.

In terms of biological role, GTPase that plays an essential role in the late steps of ribosome biogenesis. This chain is GTPase Der, found in Mycoplasmopsis agalactiae (strain NCTC 10123 / CIP 59.7 / PG2) (Mycoplasma agalactiae).